The sequence spans 462 residues: Probable peptidoglycan glycosyltransferase FtsW (462 aa).

Residues 1–28 (MREPRHVPQLRASGRRFPQRGRRHRFGK) form a disordered region. Over 1 to 92 (MREPRHVPQL…RSRMLDFDYS (92 aa)) the chain is Cytoplasmic. Over residues 13 to 27 (SGRRFPQRGRRHRFG) the composition is skewed to basic residues. Residues 93 to 113 (LLWVSIALLGLGVVMVYSASI) traverse the membrane as a helical segment. At 114–127 (AMPDSPKYASYHDY) the chain is on the periplasmic side. A helical transmembrane segment spans residues 128–148 (AFLLRHCVSLVVAFVAAVIAF). The Cytoplasmic segment spans residues 149 to 158 (RVPVSTWDKY). A helical transmembrane segment spans residues 159-179 (APHLFLIALVGLVIVLIPHIG). The Periplasmic portion of the chain corresponds to 180-192 (KGVNGARRWIPLG). Residues 193–215 (ITNMQPSEIMKLAVTIYAANYTV) form a helical membrane-spanning segment. Residues 216–223 (RKQEYMQS) are Cytoplasmic-facing. A helical membrane pass occupies residues 224 to 244 (FAKGFLPMAFAVGLVGALLLL). The Periplasmic portion of the chain corresponds to 245-247 (EPD). A helical transmembrane segment spans residues 248-268 (MGAFMVVAAIAMGVLFLGGVN). Topologically, residues 269–270 (GK) are cytoplasmic. A helical membrane pass occupies residues 271–291 (LFGGLVATAVGTFTMLVWLSP). Residues 292 to 349 (WRRERIFAYLDPWDERYAQGKAYQLTHSLIAFGRGEWFGVGLGGSVEKLNYLPEAHTD) are Periplasmic-facing. The helical transmembrane segment at 350-370 (FILAVIGEELGFVGVLVVILL) threads the bilayer. The Cytoplasmic segment spans residues 371–398 (FYWIVRRSFEIGRQALALDRTFAGLMAK). The helical transmembrane segment at 399 to 419 (GVGIWFGAQAFINMGVNLGLL) threads the bilayer. At 420-425 (PTKGLT) the chain is on the periplasmic side. A helical membrane pass occupies residues 426-446 (LPLVSYGGSGILLNCISLAVL). Topologically, residues 447–462 (LRVDYENRVLMRGGKV) are cytoplasmic.

It belongs to the SEDS family. FtsW subfamily.

The protein resides in the cell inner membrane. It catalyses the reaction [GlcNAc-(1-&gt;4)-Mur2Ac(oyl-L-Ala-gamma-D-Glu-L-Lys-D-Ala-D-Ala)](n)-di-trans,octa-cis-undecaprenyl diphosphate + beta-D-GlcNAc-(1-&gt;4)-Mur2Ac(oyl-L-Ala-gamma-D-Glu-L-Lys-D-Ala-D-Ala)-di-trans,octa-cis-undecaprenyl diphosphate = [GlcNAc-(1-&gt;4)-Mur2Ac(oyl-L-Ala-gamma-D-Glu-L-Lys-D-Ala-D-Ala)](n+1)-di-trans,octa-cis-undecaprenyl diphosphate + di-trans,octa-cis-undecaprenyl diphosphate + H(+). It functions in the pathway cell wall biogenesis; peptidoglycan biosynthesis. In terms of biological role, peptidoglycan polymerase that is essential for cell division. The polypeptide is Probable peptidoglycan glycosyltransferase FtsW (Burkholderia thailandensis (strain ATCC 700388 / DSM 13276 / CCUG 48851 / CIP 106301 / E264)).